A 197-amino-acid polypeptide reads, in one-letter code: Cytochrome c-L (197 aa).

A signal peptide spans 1–25; it reads MMNRVKIGTALLGLTLAGIALPALA. Positions 90, 93, and 94 each coordinate heme c.

Post-translationally, binds 1 heme c group covalently per subunit.

The protein resides in the periplasm. Electron acceptor for MDH. Acts in methanol oxidation. The sequence is that of Cytochrome c-L (moxG) from Methylorubrum extorquens (strain ATCC 14718 / DSM 1338 / JCM 2805 / NCIMB 9133 / AM1) (Methylobacterium extorquens).